The chain runs to 290 residues: Cilia- and flagella-associated protein 298 (290 aa).

This sequence belongs to the CFAP298 family. Interacts with dnaaf1/swt. Interacts with lrrc6/sea. Interacts with dvl (via DEP and PDZ domains). In terms of tissue distribution, strongly expressed in ciliated tissues of the embryonic trunk, including the pronephric ducts and spinal canal.

It localises to the cytoplasm. Its subcellular location is the cytoskeleton. The protein resides in the cilium basal body. Functionally, plays a role in motile cilium function, possibly by acting on outer dynein arm assembly. Seems to be important for initiation rather than maintenance of cilium motility. Required for correct positioning of cilia at the apical cell surface, suggesting an additional role in the planar cell polarity (PCP) pathway. May suppress canonical Wnt signaling activity. The chain is Cilia- and flagella-associated protein 298 from Danio rerio (Zebrafish).